The primary structure comprises 221 residues: MVTLTKEASQVRDALLARGLETPLRGEVLDNEVRKRLIAEHMTEIMTLLNLDLTDDSLAETPHRIAKMYVEEIFAGLDYANFPKITVIENKMKVDEMVTVRDITLTSTCEHHFVIIDGKATVSYIPKHCVIGLSKINRIVQFFAQRPQVQERLTQQIMLALQTLLGTNNVAVSIDAVHYCVKARGIRDATSTTTITSLGGLFKSSQNTRQEFLRAVTHYNG.

Positions 109, 112, and 180 each coordinate Zn(2+).

Belongs to the GTP cyclohydrolase I family. As to quaternary structure, toroid-shaped homodecamer, composed of two pentamers of five dimers.

The enzyme catalyses GTP + H2O = 7,8-dihydroneopterin 3'-triphosphate + formate + H(+). It functions in the pathway cofactor biosynthesis; 7,8-dihydroneopterin triphosphate biosynthesis; 7,8-dihydroneopterin triphosphate from GTP: step 1/1. This is GTP cyclohydrolase 1 from Sodalis glossinidius (strain morsitans).